The primary structure comprises 509 residues: Pentatricopeptide repeat-containing protein At2g13420, mitochondrial (509 aa).

The N-terminal 19 residues, 1–19 (MLLLKQISPPFHLHQLRRR), are a transit peptide targeting the mitochondrion. 8 PPR repeats span residues 172 to 202 (RLVE…RKEE), 206 to 240 (DEKV…GIEP), 241 to 285 (NVVT…GIEP), 286 to 320 (DVTS…GISP), 321 to 355 (TIET…GISP), 356 to 390 (SSAT…LCKP), 391 to 425 (STQT…ETGP), and 426 to 460 (DLDS…GFLP).

It belongs to the PPR family. P subfamily.

The protein resides in the mitochondrion. The polypeptide is Pentatricopeptide repeat-containing protein At2g13420, mitochondrial (Arabidopsis thaliana (Mouse-ear cress)).